The chain runs to 296 residues: 33 kDa chaperonin (296 aa).

2 disulfide bridges follow: cysteine 236-cysteine 238 and cysteine 269-cysteine 272.

Belongs to the HSP33 family. Under oxidizing conditions two disulfide bonds are formed involving the reactive cysteines. Under reducing conditions zinc is bound to the reactive cysteines and the protein is inactive.

It is found in the cytoplasm. Functionally, redox regulated molecular chaperone. Protects both thermally unfolding and oxidatively damaged proteins from irreversible aggregation. Plays an important role in the bacterial defense system toward oxidative stress. In Lactobacillus helveticus (strain DPC 4571), this protein is 33 kDa chaperonin.